The sequence spans 47 residues: Type II secretion system protein N (47 aa).

It belongs to the GSP N family.

The protein localises to the cell inner membrane. Functionally, involved in a type II secretion system (T2SS, formerly general secretion pathway, GSP) for the export of proteins. This is Type II secretion system protein N (exeN) from Aeromonas salmonicida.